The chain runs to 226 residues: Enolase-phosphatase E1 (226 aa).

It belongs to the HAD-like hydrolase superfamily. MasA/MtnC family. Monomer. Requires Mg(2+) as cofactor.

It catalyses the reaction 5-methylsulfanyl-2,3-dioxopentyl phosphate + H2O = 1,2-dihydroxy-5-(methylsulfanyl)pent-1-en-3-one + phosphate. It participates in amino-acid biosynthesis; L-methionine biosynthesis via salvage pathway; L-methionine from S-methyl-5-thio-alpha-D-ribose 1-phosphate: step 3/6. The protein operates within amino-acid biosynthesis; L-methionine biosynthesis via salvage pathway; L-methionine from S-methyl-5-thio-alpha-D-ribose 1-phosphate: step 4/6. In terms of biological role, bifunctional enzyme that catalyzes the enolization of 2,3-diketo-5-methylthiopentyl-1-phosphate (DK-MTP-1-P) into the intermediate 2-hydroxy-3-keto-5-methylthiopentenyl-1-phosphate (HK-MTPenyl-1-P), which is then dephosphorylated to form the acireductone 1,2-dihydroxy-3-keto-5-methylthiopentene (DHK-MTPene). This is Enolase-phosphatase E1 from Shewanella baltica (strain OS195).